The chain runs to 144 residues: Large ribosomal subunit protein uL15 (144 aa).

The interval 1–44 is disordered; it reads MNLNELQPAAGSRHVRNRVGRGTSSGNGKTSGRGQKGQKARGKV. Positions 23 to 35 are enriched in gly residues; that stretch reads TSSGNGKTSGRGQ.

This sequence belongs to the universal ribosomal protein uL15 family. As to quaternary structure, part of the 50S ribosomal subunit.

Its function is as follows. Binds to the 23S rRNA. This Leuconostoc mesenteroides subsp. mesenteroides (strain ATCC 8293 / DSM 20343 / BCRC 11652 / CCM 1803 / JCM 6124 / NCDO 523 / NBRC 100496 / NCIMB 8023 / NCTC 12954 / NRRL B-1118 / 37Y) protein is Large ribosomal subunit protein uL15.